The following is a 270-amino-acid chain: Chlorophyll a-b binding protein 7, chloroplastic (270 aa).

A chloroplast-targeting transit peptide spans 1–42 (MASACASSTIAAVAFSSPSSRRNGSIVGTTKASFLGGRRLRV). Position 68 (Trp-68) interacts with chlorophyll b. Phe-88, Glu-107, and His-110 together coordinate chlorophyll a. Chlorophyll b is bound at residue Arg-112. The helical transmembrane segment at 113–133 (WAMLGAAGIFIPELLTKIGIL) threads the bilayer. Chlorophyll a is bound at residue Gln-144. Residues 146-166 (YFTDTTTLFIVELVLIGWAEG) traverse the membrane as a helical segment. Chlorophyll b-binding residues include Ile-155, Glu-165, and Arg-168. Chlorophyll a-binding residues include Lys-221, Glu-222, Asn-225, Arg-227, Gln-239, and His-254. A helical membrane pass occupies residues 228 to 248 (LAMLAVMGAWFQHIYTGTGPI).

It belongs to the light-harvesting chlorophyll a/b-binding (LHC) protein family. As to quaternary structure, the LHC complex consists of chlorophyll a-b binding proteins. It depends on Binds at least 14 chlorophylls (8 Chl-a and 6 Chl-b) and carotenoids such as lutein and neoxanthin. as a cofactor. Photoregulated by reversible phosphorylation of its threonine residues.

It localises to the plastid. Its subcellular location is the chloroplast thylakoid membrane. Its function is as follows. The light-harvesting complex (LHC) functions as a light receptor, it captures and delivers excitation energy to photosystems with which it is closely associated. This Solanum lycopersicum (Tomato) protein is Chlorophyll a-b binding protein 7, chloroplastic (CAB7).